A 358-amino-acid chain; its full sequence is Peptide chain release factor 1 (358 aa).

The residue at position 233 (Gln233) is an N5-methylglutamine.

The protein belongs to the prokaryotic/mitochondrial release factor family. In terms of processing, methylated by PrmC. Methylation increases the termination efficiency of RF1.

Its subcellular location is the cytoplasm. In terms of biological role, peptide chain release factor 1 directs the termination of translation in response to the peptide chain termination codons UAG and UAA. The chain is Peptide chain release factor 1 from Staphylococcus haemolyticus (strain JCSC1435).